A 506-amino-acid chain; its full sequence is Lysine--tRNA ligase (506 aa).

Mg(2+) is bound by residues glutamate 411 and glutamate 418.

It belongs to the class-II aminoacyl-tRNA synthetase family. As to quaternary structure, homodimer. Requires Mg(2+) as cofactor.

The protein localises to the cytoplasm. It carries out the reaction tRNA(Lys) + L-lysine + ATP = L-lysyl-tRNA(Lys) + AMP + diphosphate. The chain is Lysine--tRNA ligase from Thermosynechococcus vestitus (strain NIES-2133 / IAM M-273 / BP-1).